The chain runs to 382 residues: Alanine racemase 1 (382 aa).

Lys39 serves as the catalytic Proton acceptor; specific for D-alanine. N6-(pyridoxal phosphate)lysine is present on Lys39. Substrate is bound at residue Arg138. Tyr265 functions as the Proton acceptor; specific for L-alanine in the catalytic mechanism. Residue Met312 participates in substrate binding.

This sequence belongs to the alanine racemase family. Pyridoxal 5'-phosphate serves as cofactor.

It catalyses the reaction L-alanine = D-alanine. It participates in amino-acid biosynthesis; D-alanine biosynthesis; D-alanine from L-alanine: step 1/1. Catalyzes the interconversion of L-alanine and D-alanine. May also act on other amino acids. In Staphylococcus aureus (strain MRSA252), this protein is Alanine racemase 1 (alr1).